The sequence spans 233 residues: MLLFWMWWALLAVFRAFPGIDIYFSQLFFVGADCDATAAAGNICGGFPYRDVAAFDLLRTVFFRLPYVVAIVMVWKLVECYQQHGATFNAERAQKLKVALGTLLIGPVLLVNVVLKEHWGRPRPIQTDIFGGALHFAEAGSLAGKCVSNCSFVSGEAASAGWLFCLLLFVPKSLRYAVAAPLAAISILTPAMRLSFGAHYLSDVVLGWLSSLVVFAALLALTESQQHQKNSEI.

A topological domain (cytoplasmic) is located at residue methionine 1. Residues 2 to 22 traverse the membrane as a helical segment; that stretch reads LLFWMWWALLAVFRAFPGIDI. Residues 23 to 60 lie on the Extracellular side of the membrane; sequence YFSQLFFVGADCDATAAAGNICGGFPYRDVAAFDLLRT. A helical membrane pass occupies residues 61 to 81; that stretch reads VFFRLPYVVAIVMVWKLVECY. Topologically, residues 82–94 are cytoplasmic; the sequence is QQHGATFNAERAQ. Residues 95–115 traverse the membrane as a helical segment; it reads KLKVALGTLLIGPVLLVNVVL. Over 116–149 the chain is Extracellular; it reads KEHWGRPRPIQTDIFGGALHFAEAGSLAGKCVSN. The helical transmembrane segment at 150-170 threads the bilayer; sequence CSFVSGEAASAGWLFCLLLFV. Topologically, residues 171–176 are cytoplasmic; sequence PKSLRY. Residues 177–197 traverse the membrane as a helical segment; it reads AVAAPLAAISILTPAMRLSFG. At 198-200 the chain is on the extracellular side; the sequence is AHY. A helical membrane pass occupies residues 201-221; sequence LSDVVLGWLSSLVVFAALLAL. The Cytoplasmic segment spans residues 222–233; that stretch reads TESQQHQKNSEI.

This sequence belongs to the lipid A LpxF 4'-phosphatase family.

Its subcellular location is the cell inner membrane. Its pathway is bacterial outer membrane biogenesis; LPS lipid A biosynthesis. In terms of biological role, removes the 4'-phosphate moiety from lipid IV(A) (a tetraacylated precursor of lipid A). This chain is Lipid A 4'-phosphatase, found in Rhizobium leguminosarum.